The chain runs to 81 residues: RBAK downstream neighbor protein (81 aa).

An N-terminal signal peptide occupies residues Met1–Ala22.

It is found in the secreted. This Homo sapiens (Human) protein is RBAK downstream neighbor protein (RBAKDN).